A 260-amino-acid chain; its full sequence is Ubiquinone/menaquinone biosynthesis C-methyltransferase UbiE (260 aa).

Residues T83, D104, and 132–133 (NA) each bind S-adenosyl-L-methionine.

It belongs to the class I-like SAM-binding methyltransferase superfamily. MenG/UbiE family.

The enzyme catalyses a 2-demethylmenaquinol + S-adenosyl-L-methionine = a menaquinol + S-adenosyl-L-homocysteine + H(+). It catalyses the reaction a 2-methoxy-6-(all-trans-polyprenyl)benzene-1,4-diol + S-adenosyl-L-methionine = a 5-methoxy-2-methyl-3-(all-trans-polyprenyl)benzene-1,4-diol + S-adenosyl-L-homocysteine + H(+). The protein operates within quinol/quinone metabolism; menaquinone biosynthesis; menaquinol from 1,4-dihydroxy-2-naphthoate: step 2/2. It participates in cofactor biosynthesis; ubiquinone biosynthesis. In terms of biological role, methyltransferase required for the conversion of demethylmenaquinol (DMKH2) to menaquinol (MKH2) and the conversion of 2-polyprenyl-6-methoxy-1,4-benzoquinol (DDMQH2) to 2-polyprenyl-3-methyl-6-methoxy-1,4-benzoquinol (DMQH2). The polypeptide is Ubiquinone/menaquinone biosynthesis C-methyltransferase UbiE (Bartonella quintana (strain Toulouse) (Rochalimaea quintana)).